We begin with the raw amino-acid sequence, 67 residues long: Large ribosomal subunit protein uL30 (67 aa).

It belongs to the universal ribosomal protein uL30 family. As to quaternary structure, part of the 50S ribosomal subunit.

The chain is Large ribosomal subunit protein uL30 from Thermotoga petrophila (strain ATCC BAA-488 / DSM 13995 / JCM 10881 / RKU-1).